A 194-amino-acid polypeptide reads, in one-letter code: Acid tolerance regulatory protein ActR (194 aa).

Positions 24 to 138 constitute a Response regulatory domain; sequence SLLIVDDDTA…DILAALIQRP (115 aa). Asp73 is modified (4-aspartylphosphate).

Post-translationally, phosphorylated by ActS.

Member of the two-component regulatory system ActS/ActR acting in acid tolerance. These data implicate that a two-component sensor may be involved in pH sensing and/or response. The chain is Acid tolerance regulatory protein ActR (actR) from Rhizobium meliloti (strain 1021) (Ensifer meliloti).